The sequence spans 123 residues: uncharacterized protein (123 aa).

The next 2 membrane-spanning stretches (helical) occupy residues 55-77 and 92-114; these read LLIH…STIL and FFIN…TIVY.

Its subcellular location is the cell membrane. This is an uncharacterized protein from Pasteurella multocida (strain Pm70).